Here is a 168-residue protein sequence, read N- to C-terminus: MIDLGISKLALIGAVALIVIGPERLPRVARTVGALVGRAQRYINDVKAEVSREVELEELRKMRTEFEDAARDVERTIHKEVSEQTQALNEALGGIEPSAESGGGVSDFVPSWHSAHKAHNGRKSWRVKQGARPLWFKRQNNVRVWVQSGAARVKRHRPAAGRARSFFE.

A helical transmembrane segment spans residues 1–21; the sequence is MIDLGISKLALIGAVALIVIG.

This sequence belongs to the TatB family. The Tat system comprises two distinct complexes: a TatABC complex, containing multiple copies of TatA, TatB and TatC subunits, and a separate TatA complex, containing only TatA subunits. Substrates initially bind to the TatABC complex, which probably triggers association of the separate TatA complex to form the active translocon.

The protein resides in the cell inner membrane. Part of the twin-arginine translocation (Tat) system that transports large folded proteins containing a characteristic twin-arginine motif in their signal peptide across membranes. Together with TatC, TatB is part of a receptor directly interacting with Tat signal peptides. TatB may form an oligomeric binding site that transiently accommodates folded Tat precursor proteins before their translocation. The polypeptide is Sec-independent protein translocase protein TatB (Cupriavidus pinatubonensis (strain JMP 134 / LMG 1197) (Cupriavidus necator (strain JMP 134))).